The chain runs to 337 residues: Glyceraldehyde-3-phosphate dehydrogenase 1 (337 aa).

NAD(+) contacts are provided by residues 12 to 13 (RI), aspartate 34, and arginine 79. Residues 150 to 152 (SCT), threonine 181, 210 to 211 (TG), and arginine 233 contribute to the D-glyceraldehyde 3-phosphate site. Cysteine 151 serves as the catalytic Nucleophile. Asparagine 315 is a binding site for NAD(+).

This sequence belongs to the glyceraldehyde-3-phosphate dehydrogenase family. As to quaternary structure, homotetramer.

The protein resides in the cytoplasm. The catalysed reaction is D-glyceraldehyde 3-phosphate + phosphate + NAD(+) = (2R)-3-phospho-glyceroyl phosphate + NADH + H(+). It functions in the pathway carbohydrate degradation; glycolysis; pyruvate from D-glyceraldehyde 3-phosphate: step 1/5. This Mucor circinelloides f. lusitanicus (Mucor racemosus var. lusitanicus) protein is Glyceraldehyde-3-phosphate dehydrogenase 1 (GPD1).